Reading from the N-terminus, the 118-residue chain is UPF0102 protein Dtur_1530 (118 aa).

Belongs to the UPF0102 family.

In Dictyoglomus turgidum (strain DSM 6724 / Z-1310), this protein is UPF0102 protein Dtur_1530.